We begin with the raw amino-acid sequence, 217 residues long: UPF0319 protein VS_II0881 (217 aa).

The N-terminal stretch at 1–21 (MKTIQSIALLSAIVAAPSVLA) is a signal peptide.

Belongs to the UPF0319 family.

The protein is UPF0319 protein VS_II0881 of Vibrio atlanticus (strain LGP32) (Vibrio splendidus (strain Mel32)).